The chain runs to 179 residues: Bifunctional protein PyrR (179 aa).

The short motif at 100-112 is the PRPP-binding element; it reads VILVDDVLFTGRT.

Belongs to the purine/pyrimidine phosphoribosyltransferase family. PyrR subfamily. As to quaternary structure, homodimer and homohexamer; in equilibrium.

The enzyme catalyses UMP + diphosphate = 5-phospho-alpha-D-ribose 1-diphosphate + uracil. Functionally, regulates transcriptional attenuation of the pyrimidine nucleotide (pyr) operon by binding in a uridine-dependent manner to specific sites on pyr mRNA. This disrupts an antiterminator hairpin in the RNA and favors formation of a downstream transcription terminator, leading to a reduced expression of downstream genes. Also displays a weak uracil phosphoribosyltransferase activity which is not physiologically significant. The chain is Bifunctional protein PyrR from Geobacillus sp. (strain WCH70).